The sequence spans 187 residues: Elongation factor P (187 aa).

Lys-34 carries the N6-(3,6-diaminohexanoyl)-5-hydroxylysine modification.

It belongs to the elongation factor P family. Post-translationally, may be beta-lysylated on the epsilon-amino group of Lys-34 by the combined action of EpmA and EpmB, and then hydroxylated on the C5 position of the same residue by EpmC (if this protein is present). Lysylation is critical for the stimulatory effect of EF-P on peptide-bond formation. The lysylation moiety may extend toward the peptidyltransferase center and stabilize the terminal 3-CCA end of the tRNA. Hydroxylation of the C5 position on Lys-34 may allow additional potential stabilizing hydrogen-bond interactions with the P-tRNA.

The protein resides in the cytoplasm. The protein operates within protein biosynthesis; polypeptide chain elongation. In terms of biological role, involved in peptide bond synthesis. Alleviates ribosome stalling that occurs when 3 or more consecutive Pro residues or the sequence PPG is present in a protein, possibly by augmenting the peptidyl transferase activity of the ribosome. Modification of Lys-34 is required for alleviation. The chain is Elongation factor P from Vesicomyosocius okutanii subsp. Calyptogena okutanii (strain HA).